The chain runs to 345 residues: G-protein coupled receptor family C group 5 member D (345 aa).

Residues 1-27 are Extracellular-facing; sequence MYKDCIESTGDYFLLCDAEGPWGIILE. Residues 28-48 traverse the membrane as a helical segment; sequence SLAILGIVVTILLLLAFLFLM. Over 49-63 the chain is Cytoplasmic; it reads RKIQDCSQWNVLPTQ. A helical membrane pass occupies residues 64–84; that stretch reads LLFLLSVLGLFGLAFAFIIEL. Residues 85 to 93 are Extracellular-facing; that stretch reads NQQTAPVRY. The chain crosses the membrane as a helical span at residues 94–114; sequence FLFGVLFALCFSCLLAHASNL. Residues 115–123 lie on the Cytoplasmic side of the membrane; the sequence is VKLVRGCVS. The chain crosses the membrane as a helical span at residues 124–144; the sequence is FSWTTILCIAIGCSLLQIIIA. The Extracellular segment spans residues 145-167; that stretch reads TEYVTLIMTRGMMFVNMTPCQLN. The chain crosses the membrane as a helical span at residues 168–188; that stretch reads VDFVVLLVYVLFLMALTFFVS. Over 189–204 the chain is Cytoplasmic; sequence KATFCGPCENWKQHGR. Residues 205–225 form a helical membrane-spanning segment; the sequence is LIFITVLFSIIIWVVWISMLL. At 226 to 239 the chain is on the extracellular side; it reads RGNPQFQRQPQWDD. A helical transmembrane segment spans residues 240-260; sequence PVVCIALVTNAWVFLLLYIVP. The Cytoplasmic portion of the chain corresponds to 261–345; it reads ELCILYRSCR…LSPQQDAGGV (85 aa).

This sequence belongs to the G-protein coupled receptor 3 family. In terms of assembly, homodimer. In terms of tissue distribution, widely expressed in the peripheral system. Expression pattern is high in pancreas, medium in kidney, small intestine, spleen and testis, low in lung, colon, leukocyte, prostate and thymus and not detectable in brain, heart, liver, placenta, skeletal muscle and ovary.

Its subcellular location is the cell membrane. In terms of biological role, G-protein coupled receptor involved in hard keratin expression and likely plays a role in the development of hair and nails. The protein is G-protein coupled receptor family C group 5 member D (GPRC5D) of Homo sapiens (Human).